We begin with the raw amino-acid sequence, 238 residues long: 3-dehydroquinate dehydratase (238 aa).

Residues 35 to 37 and Arg68 contribute to the 3-dehydroquinate site; that span reads ELR. The active-site Proton donor/acceptor is the His131. Lys158 functions as the Schiff-base intermediate with substrate in the catalytic mechanism. 2 residues coordinate 3-dehydroquinate: Arg200 and Gln223.

The protein belongs to the type-I 3-dehydroquinase family. Homodimer.

The catalysed reaction is 3-dehydroquinate = 3-dehydroshikimate + H2O. It functions in the pathway metabolic intermediate biosynthesis; chorismate biosynthesis; chorismate from D-erythrose 4-phosphate and phosphoenolpyruvate: step 3/7. Involved in the third step of the chorismate pathway, which leads to the biosynthesis of aromatic amino acids. Catalyzes the cis-dehydration of 3-dehydroquinate (DHQ) and introduces the first double bond of the aromatic ring to yield 3-dehydroshikimate. In Staphylococcus epidermidis (strain ATCC 35984 / DSM 28319 / BCRC 17069 / CCUG 31568 / BM 3577 / RP62A), this protein is 3-dehydroquinate dehydratase.